Reading from the N-terminus, the 1644-residue chain is Terminal uridylyltransferase 4 (1644 aa).

2 disordered regions span residues 30 to 60 (SNQTLKPRNDKSEIGTSSLNRNSSKKTKQND) and 75 to 277 (AASV…EMDY). Position 102 is a phosphoserine (serine 102). A compositionally biased stretch (polar residues) spans 108-123 (KGSSQTKLEKTPSLQT). A Phosphoserine modification is found at serine 131. 2 stretches are compositionally biased toward polar residues: residues 146–156 (AEATTEKALNS) and 163–174 (TPTSQMKLQKTP). Serine 176 is subject to Phosphoserine. Polar residues-rich tracts occupy residues 194–209 (QTESQQTGKKLTSSFV) and 226–242 (LENSSLSQKQQTQTDNI). The segment covering 258 to 272 (DLSKMKSEESNKENS) has biased composition (basic and acidic residues). The segment at 273 to 353 (SEMDYLENAT…KEKRHKKNIL (81 aa)) is required for interaction with LIN28A and pre-let-7 RNA. 4 residues coordinate Zn(2+): cysteine 326, cysteine 329, histidine 342, and histidine 348. The segment covering 603–623 (IADENKAKADEPKDDTKKTET) has biased composition (basic and acidic residues). Residues 603 to 640 (IADENKAKADEPKDDTKKTETDNQSNAAKAKHGKSPLT) form a disordered region. The region spanning 649-698 (LGQLWLELLKFYTLDFALEEYVICVRIQDILTRENKNWPKRRIAIEDPFS) is the PAP-associated 1 domain. Disordered regions lie at residues 733–759 (KGGNKSTMDPKKKEKGKLSSKKPVKSD) and 812–841 (HGQDSSSLSTASGGSDLKQKSAEKQGDLTP). Over residues 745–755 (KEKGKLSSKKP) the composition is skewed to basic residues. The span at 815 to 827 (DSSSLSTASGGSD) shows a compositional bias: low complexity. A compositionally biased stretch (basic and acidic residues) spans 828 to 837 (LKQKSAEKQG). A sufficient for monouridylation activity region spans residues 918-1634 (DKFILTSGKP…CATRRCRERC (717 aa)). A CCHC-type 1 zinc finger spans residues 930 to 947 (IVCSICKKDGHSKNDCPE). UTP is bound by residues 1015-1018 (SSKN), 1025-1028 (SDLD), asparagine 1098, lysine 1120, 1138-1142 (SYAYI), and histidine 1254. Residues aspartate 1026 and aspartate 1028 each coordinate Mg(2+). Positions 1201–1254 (SLGELWLGLLRFYTEEFDFKEYVISIRQKKLLTTFEKQWTSKCIAIEDPFDLNH) constitute a PAP-associated 2 domain. The CCHC-type 2 zinc-finger motif lies at 1310–1327 (RCCRVCGKIGHYMKDCPK). The disordered stretch occupies residues 1329 to 1350 (KRLKKKDSEEEKEGNEEEKDSR). The CCHC-type 3 zinc-finger motif lies at 1358 to 1375 (LRCFICGDAGHVRRECPE). Residues 1402–1427 (AGSAQQQSDQSIRTRQSSECSDSPSY) are compositionally biased toward low complexity. The interval 1402–1483 (AGSAQQQSDQ…LYNFPQSPPA (82 aa)) is disordered. Pro residues predominate over residues 1428 to 1450 (SPQPQPFPQNSPQPSALPPPPSQ). Low complexity predominate over residues 1451–1473 (PGSQPKLGPPQQGGQPPHQVQMP). Arginine 1624 bears the Omega-N-methylarginine mark.

This sequence belongs to the DNA polymerase type-B-like family. In terms of assembly, interacts with LIN28A in the presence of pre-let-7 RNA. Interacts with T2BP. Interacts with MOV10; the interaction is RNA-dependent. Requires Mg(2+) as cofactor. Mn(2+) is required as a cofactor. As to expression, ubiquitously expressed.

It localises to the nucleus. The protein localises to the cytoplasm. Its subcellular location is the cytoplasmic ribonucleoprotein granule. The enzyme catalyses RNA(n) + UTP = RNA(n)-3'-uridine ribonucleotide + diphosphate. Its function is as follows. Uridylyltransferase that mediates the terminal uridylation of mRNAs with short (less than 25 nucleotides) poly(A) tails, hence facilitating global mRNA decay. Essential for both oocyte maturation and fertility. Through 3' terminal uridylation of mRNA, sculpts, with TUT7, the maternal transcriptome by eliminating transcripts during oocyte growth. Involved in microRNA (miRNA)-induced gene silencing through uridylation of deadenylated miRNA targets. Also functions as an integral regulator of microRNA biogenesiS using 3 different uridylation mechanisms. Acts as a suppressor of miRNA biogenesis by mediating the terminal uridylation of some miRNA precursors, including that of let-7 (pre-let-7), miR107, miR-143 and miR-200c. Uridylated miRNAs are not processed by Dicer and undergo degradation. Degradation of pre-let-7 contributes to the maintenance of embryonic stem (ES) cell pluripotency. Also catalyzes the 3' uridylation of miR-26A, a miRNA that targets IL6 transcript. This abrogates the silencing of IL6 transcript, hence promoting cytokine expression. In the absence of LIN28A, TUT7 and TUT4 monouridylate group II pre-miRNAs, which includes most of pre-let7 members, that shapes an optimal 3' end overhang for efficient processing. Add oligo-U tails to truncated pre-miRNAS with a 5' overhang which may promote rapid degradation of non-functional pre-miRNA species. May also suppress Toll-like receptor-induced NF-kappa-B activation via binding to T2BP. Does not play a role in replication-dependent histone mRNA degradation. Due to functional redundancy between TUT4 and TUT7, the identification of the specific role of each of these proteins is difficult. TUT4 and TUT7 restrict retrotransposition of long interspersed element-1 (LINE-1) in cooperation with MOV10 counteracting the RNA chaperonne activity of L1RE1. TUT7 uridylates LINE-1 mRNAs in the cytoplasm which inhibits initiation of reverse transcription once in the nucleus, whereas uridylation by TUT4 destabilizes mRNAs in cytoplasmic ribonucleoprotein granules. The polypeptide is Terminal uridylyltransferase 4 (Mus musculus (Mouse)).